The chain runs to 346 residues: Protein RecA (346 aa).

66–73 (GPESSGKT) provides a ligand contact to ATP.

It belongs to the RecA family.

It is found in the cytoplasm. Can catalyze the hydrolysis of ATP in the presence of single-stranded DNA, the ATP-dependent uptake of single-stranded DNA by duplex DNA, and the ATP-dependent hybridization of homologous single-stranded DNAs. It interacts with LexA causing its activation and leading to its autocatalytic cleavage. This Aromatoleum aromaticum (strain DSM 19018 / LMG 30748 / EbN1) (Azoarcus sp. (strain EbN1)) protein is Protein RecA.